The following is a 341-amino-acid chain: L-threonine 3-dehydrogenase (341 aa).

Zn(2+) is bound at residue Cys-38. Catalysis depends on charge relay system residues Thr-40 and His-43. The Zn(2+) site is built by His-63, Glu-64, Cys-93, Cys-96, Cys-99, and Cys-107. NAD(+) is bound by residues Ile-175, Asp-195, Arg-200, 262–264 (LGI), and 286–287 (IY).

The protein belongs to the zinc-containing alcohol dehydrogenase family. In terms of assembly, homotetramer. The cofactor is Zn(2+).

Its subcellular location is the cytoplasm. The enzyme catalyses L-threonine + NAD(+) = (2S)-2-amino-3-oxobutanoate + NADH + H(+). The protein operates within amino-acid degradation; L-threonine degradation via oxydo-reductase pathway; glycine from L-threonine: step 1/2. Functionally, catalyzes the NAD(+)-dependent oxidation of L-threonine to 2-amino-3-ketobutyrate. This Salmonella choleraesuis (strain SC-B67) protein is L-threonine 3-dehydrogenase.